The primary structure comprises 247 residues: uncharacterized protein (247 aa).

The signal sequence occupies residues 1-35; the sequence is MWGPGVTAEGLSVAPAPPPLLPLLLLLALALVAPS. Asn-57 carries N-linked (GlcNAc...) asparagine glycosylation. Residues 82–102 form a helical membrane-spanning segment; it reads LSGLLILLVLFAIGYFLQRII. The interval 109 to 179 is disordered; that stretch reads YPRGQARPGQ…GGRSDPSCAS (71 aa). Over residues 160–172 the composition is skewed to gly residues; it reads SGGGGRGRGGGGR.

It localises to the membrane. This is an uncharacterized protein from Homo sapiens (Human).